We begin with the raw amino-acid sequence, 555 residues long: Dihydroxy-acid dehydratase (555 aa).

Asp-78 contributes to the Mg(2+) binding site. Cys-119 lines the [2Fe-2S] cluster pocket. Mg(2+) contacts are provided by Asp-120 and Lys-121. Position 121 is an N6-carboxylysine (Lys-121). A [2Fe-2S] cluster-binding site is contributed by Cys-195. Residue Glu-444 coordinates Mg(2+). Residue Ser-470 is the Proton acceptor of the active site.

The protein belongs to the IlvD/Edd family. In terms of assembly, homodimer. The cofactor is [2Fe-2S] cluster. Requires Mg(2+) as cofactor.

The catalysed reaction is (2R)-2,3-dihydroxy-3-methylbutanoate = 3-methyl-2-oxobutanoate + H2O. The enzyme catalyses (2R,3R)-2,3-dihydroxy-3-methylpentanoate = (S)-3-methyl-2-oxopentanoate + H2O. Its pathway is amino-acid biosynthesis; L-isoleucine biosynthesis; L-isoleucine from 2-oxobutanoate: step 3/4. It functions in the pathway amino-acid biosynthesis; L-valine biosynthesis; L-valine from pyruvate: step 3/4. Functionally, functions in the biosynthesis of branched-chain amino acids. Catalyzes the dehydration of (2R,3R)-2,3-dihydroxy-3-methylpentanoate (2,3-dihydroxy-3-methylvalerate) into 2-oxo-3-methylpentanoate (2-oxo-3-methylvalerate) and of (2R)-2,3-dihydroxy-3-methylbutanoate (2,3-dihydroxyisovalerate) into 2-oxo-3-methylbutanoate (2-oxoisovalerate), the penultimate precursor to L-isoleucine and L-valine, respectively. This chain is Dihydroxy-acid dehydratase, found in Dehalococcoides mccartyi (strain CBDB1).